Consider the following 1638-residue polypeptide: DNA polymerase III PolC-type (1638 aa).

Residues 193 to 212 are disordered; sequence SEIKKQRSEERESKNTREAK. The span at 194–212 shows a compositional bias: basic and acidic residues; the sequence is EIKKQRSEERESKNTREAK. Residues 596–752 form the Exonuclease domain; the sequence is YVVFDVETTG…FDAEATGRLL (157 aa).

The protein belongs to the DNA polymerase type-C family. PolC subfamily.

The protein resides in the cytoplasm. It carries out the reaction DNA(n) + a 2'-deoxyribonucleoside 5'-triphosphate = DNA(n+1) + diphosphate. Its function is as follows. Required for replicative DNA synthesis. This DNA polymerase also exhibits 3' to 5' exonuclease activity. This chain is DNA polymerase III PolC-type, found in Lactococcus lactis subsp. lactis (strain IL1403) (Streptococcus lactis).